The chain runs to 479 residues: Sodium-coupled neutral amino acid transporter 5 (479 aa).

Residues 1-58 lie on the Cytoplasmic side of the membrane; sequence MAISCAVGMEMQEPKMNGTLSTGAAAGYRQEREGFLPTTHGPAPGRKPVQFLDFEGKT. The chain crosses the membrane as a helical span at residues 59–81; it reads SFGMSVFNLSNAIMGSGILGLAY. The Extracellular portion of the chain corresponds to 82 to 97; the sequence is AMAHTGVIFFLALLLC. Residues 98–118 traverse the membrane as a helical segment; the sequence is IALLSSYSIHLLLTCASVVGI. The Cytoplasmic segment spans residues 119-135; that stretch reads RAYEQLGQRAFGPAGKV. The helical transmembrane segment at 136-156 threads the bilayer; sequence VVAIIICLHNVGAMSSYLFII. Residues 157–176 are Extracellular-facing; it reads KSELPLVIGTFLHMDPEGDW. Residues 177-197 form a helical membrane-spanning segment; that stretch reads FLKGNLLIILVSLLIILPLAL. Over 198 to 202 the chain is Cytoplasmic; the sequence is MKHLG. The helical transmembrane segment at 203–223 threads the bilayer; sequence YLGYTSSLSLTCMLFFLISVI. The Extracellular portion of the chain corresponds to 224–264; the sequence is YKKFQLGCVVSHNDTVVESEPAPLQAFNSSCEAKLFTVDSQ. C231 and C254 form a disulfide bridge. Residue N236 is glycosylated (N-linked (GlcNAc...) asparagine). A helical transmembrane segment spans residues 265–285; the sequence is MSYTVPIMAFAFVCHPEVLPI. Over 286-302 the chain is Cytoplasmic; sequence YTELCCPTQRRMQAVAN. The helical transmembrane segment at 303-323 threads the bilayer; it reads MSIGAMFIMYGLTATFGYLTF. The Extracellular portion of the chain corresponds to 324-341; sequence YSTVKAEMLEMYTQEDLL. A helical membrane pass occupies residues 342 to 362; the sequence is ILCVRLAVLLAVTLTVPVVLF. Over 363–383 the chain is Cytoplasmic; the sequence is PIRRALQQLLFPSKAFSWPRH. Residues 384-404 form a helical membrane-spanning segment; it reads VAIALILLILVNILVICVPTI. At 405 to 406 the chain is on the extracellular side; it reads RD. A helical transmembrane segment spans residues 407-427; sequence IFGFIGSTSAPSLIFILPSVF. The Cytoplasmic portion of the chain corresponds to 428 to 446; it reads YLRIVPADMEPLFSWPKIQ. A helical membrane pass occupies residues 447 to 467; it reads ALCFGVLGVLFMAISLGFMFA. The Extracellular portion of the chain corresponds to 468–479; it reads NWATGQSRMSGH.

It belongs to the amino acid/polyamine transporter 2 family. As to expression, highly expressed in neocortex, hippocampus, striatum and spinal cord by astrocytes (at protein level). Expressed in brain, lung, stomach, kidney, spleen and testis. Expressed in the cerebral cortex between the second and third postnatal week, where expressed exclusively in glial cells from postnatal day 14 to adulthood (at protein level). Expressed in the cerebellum at post natal day 12 (P12). Expressed in liver. Expressed inside the cell body of the astrocytes.

It localises to the cell membrane. The catalysed reaction is L-serine(out) + Na(+)(out) + H(+)(in) = L-serine(in) + Na(+)(in) + H(+)(out). The enzyme catalyses L-alanine(out) + Na(+)(out) + H(+)(in) = L-alanine(in) + Na(+)(in) + H(+)(out). It catalyses the reaction glycine(out) + Na(+)(out) + H(+)(in) = glycine(in) + Na(+)(in) + H(+)(out). It carries out the reaction L-glutamine(out) + Na(+)(out) + H(+)(in) = L-glutamine(in) + Na(+)(in) + H(+)(out). The catalysed reaction is L-asparagine(out) + Na(+)(out) + H(+)(in) = L-asparagine(in) + Na(+)(in) + H(+)(out). The enzyme catalyses L-histidine(out) + Na(+)(out) + H(+)(in) = L-histidine(in) + Na(+)(in) + H(+)(out). It catalyses the reaction L-cysteine(out) + Na(+)(out) + H(+)(in) = L-cysteine(in) + Na(+)(in) + H(+)(out). Its activity is regulated as follows. Not inhibited by lithium. Partial allosteric regulation on ions sodium binding. Its function is as follows. Symporter that cotransports neutral amino acids and sodium ions, coupled to an H(+) antiporter activity. Releases L-glutamine and glycine from astroglial cells and may participate in the glutamate/GABA-glutamine cycle and the NMDA receptors activation. In addition contributes significantly to L-glutamine uptake in retina, namely in ganglion and Mueller cells and, therefore participates in the retinal glutamate-glutamine cycle. The transport activity is pH sensitive, Li(+) tolerant, bidirectional and associated with large uncoupled fluxes of protons. The transport is electroneutral coupled to the cotransport of 1 Na(+) and the antiport of 1 H(+). May have particular importance for modulation of net hepatic glutamine flux. The chain is Sodium-coupled neutral amino acid transporter 5 from Rattus norvegicus (Rat).